Here is a 120-residue protein sequence, read N- to C-terminus: NAD(P)H-quinone oxidoreductase subunit 3, chloroplastic (120 aa).

3 helical membrane-spanning segments follow: residues 9–29 (IFWAFLLISSVIPILAFLISG), 64–84 (MFALVFVVFDVETVFLYPWAM), and 88–108 (VLGVSVFLEALIFVLILIVGS).

This sequence belongs to the complex I subunit 3 family. NDH is composed of at least 16 different subunits, 5 of which are encoded in the nucleus.

It localises to the plastid. The protein localises to the chloroplast thylakoid membrane. The catalysed reaction is a plastoquinone + NADH + (n+1) H(+)(in) = a plastoquinol + NAD(+) + n H(+)(out). It catalyses the reaction a plastoquinone + NADPH + (n+1) H(+)(in) = a plastoquinol + NADP(+) + n H(+)(out). In terms of biological role, NDH shuttles electrons from NAD(P)H:plastoquinone, via FMN and iron-sulfur (Fe-S) centers, to quinones in the photosynthetic chain and possibly in a chloroplast respiratory chain. The immediate electron acceptor for the enzyme in this species is believed to be plastoquinone. Couples the redox reaction to proton translocation, and thus conserves the redox energy in a proton gradient. This chain is NAD(P)H-quinone oxidoreductase subunit 3, chloroplastic, found in Acorus calamus var. americanus (American sweet flag).